Reading from the N-terminus, the 484-residue chain is MEAACLVRRLGLPQGEEALKARLRRPGHPRLREALAAYLKRLQAPEEVFRALERLEVGAVVTGQQAGLLGGPALTFYKAHTALCLADRAGAAGVFWVASQDHDVEEVRHLHLLRDEVPETLSLDLPPLPSGRIPLAPHRERLRAFLGPWAKDYRLGYALEAETLSEFFARVLLAFLGERGLVPFDPMAEELAPLFLEALERELSDPLGSAEAINREAERIRALGGKPPLRRKPGATNLFLETDQRRLLFYEGGAFTDGVRRYTAKELWEIARADPSRLTPAAGLRPVFQDLVLPTAGFVVGPNELRYVAELSGVYARYGLAMPALFLRAFGVVVEPPVRRILEKYRLDPWAFVDEGEAAFLRAAEAWLAPFRAFRDRVEGLLQEASRLVEEAEALEPNLVRPLRRFRARVRGEAERLRRKLLAAQAARDEVLARHLRRLKVHLLPFGLPQERVYPYAMYALRHGEALRRLAEAPWEGRVALYLG.

A coiled-coil region spans residues 372–435 (RAFRDRVEGL…AARDEVLARH (64 aa)).

This sequence belongs to the BshC family.

The protein is Putative cysteine ligase BshC of Thermus thermophilus (strain ATCC BAA-163 / DSM 7039 / HB27).